Consider the following 239-residue polypeptide: uncharacterized protein (239 aa).

This is an uncharacterized protein from Bacillus subtilis (strain 168).